The primary structure comprises 631 residues: tRNA uridine 5-carboxymethylaminomethyl modification enzyme MnmG (631 aa).

14 to 19 (GGGHAG) serves as a coordination point for FAD. 274–288 (GPRYCPSIEDKIHRF) lines the NAD(+) pocket.

The protein belongs to the MnmG family. As to quaternary structure, homodimer. Heterotetramer of two MnmE and two MnmG subunits. Requires FAD as cofactor.

The protein localises to the cytoplasm. NAD-binding protein involved in the addition of a carboxymethylaminomethyl (cmnm) group at the wobble position (U34) of certain tRNAs, forming tRNA-cmnm(5)s(2)U34. The chain is tRNA uridine 5-carboxymethylaminomethyl modification enzyme MnmG from Pseudomonas paraeruginosa (strain DSM 24068 / PA7) (Pseudomonas aeruginosa (strain PA7)).